The following is an 884-amino-acid chain: Protein translocase subunit SecA (884 aa).

ATP is bound by residues Q83, 101–105 (GEGKT), and D491.

This sequence belongs to the SecA family.

Its subcellular location is the plastid. It is found in the chloroplast stroma. The protein resides in the chloroplast thylakoid membrane. The catalysed reaction is ATP + H2O + cellular proteinSide 1 = ADP + phosphate + cellular proteinSide 2.. Functionally, has a central role in coupling the hydrolysis of ATP to the transfer of proteins across the thylakoid membrane. The protein is Protein translocase subunit SecA of Porphyra purpurea (Red seaweed).